The following is a 313-amino-acid chain: Ribosomal protein L11 methyltransferase (313 aa).

S-adenosyl-L-methionine-binding residues include threonine 161, glycine 182, aspartate 204, and asparagine 247.

It belongs to the methyltransferase superfamily. PrmA family.

The protein resides in the cytoplasm. The catalysed reaction is L-lysyl-[protein] + 3 S-adenosyl-L-methionine = N(6),N(6),N(6)-trimethyl-L-lysyl-[protein] + 3 S-adenosyl-L-homocysteine + 3 H(+). In terms of biological role, methylates ribosomal protein L11. This chain is Ribosomal protein L11 methyltransferase, found in Alkaliphilus oremlandii (strain OhILAs) (Clostridium oremlandii (strain OhILAs)).